Here is a 191-residue protein sequence, read N- to C-terminus: GDP-mannose pyrophosphatase (191 aa).

Residues Tyr-17, 38 to 40, Arg-67, and 85 to 87 each bind GDP-alpha-D-mannose; these read KRE and AGL. The 138-residue stretch at 43–180 folds into the Nudix hydrolase domain; the sequence is DRGNGATILL…EIRDGKTVLL (138 aa). The Mg(2+) site is built by Ala-85, Glu-100, and Glu-104. A Nudix box motif is present at residues 86-106; it reads GLLDNDEPEVCIRKEAIEETG. GDP-alpha-D-mannose-binding positions include Glu-104, Glu-127, 150 to 151, and Lys-176; that span reads DE. Residue Glu-151 coordinates Mg(2+).

This sequence belongs to the Nudix hydrolase family. NudK subfamily. As to quaternary structure, homodimer. Requires Mg(2+) as cofactor.

It carries out the reaction GDP-alpha-D-mannose + H2O = alpha-D-mannose 1-phosphate + GMP + 2 H(+). Its function is as follows. Nucleoside diphosphate sugar hydrolase that hydrolyzes GDP-mannose as its preferred substrate, yielding GMP and mannose-1-phosphate. This chain is GDP-mannose pyrophosphatase (nudK), found in Salmonella typhi.